The chain runs to 858 residues: Coiled-coil and C2 domain-containing protein 1B (858 aa).

5 disordered regions span residues 112–164, 180–199, 204–284, 329–352, and 470–533; these read VLGV…GASQ, AAASAKEAGEAAKARRCERG, ESQL…ALLS, VDLSAMPPAPEDLKPQQASQAPTA, and EKLA…SPSV. Acidic residues predominate over residues 114–143; sequence GVDEETEPLDGDEVADPGGSEEENGLEDTE. The segment covering 153–164 has biased composition (low complexity); it reads ASAPAAQAGASQ. Residues 166 to 212 are a coiled coil; the sequence is LHALLEERIHNYREAAASAKEAGEAAKARRCERGLKTLESQLASVRR. The segment covering 186 to 199 has biased composition (basic and acidic residues); sequence EAGEAAKARRCERG. Phosphoserine is present on serine 209. Residues 520–532 show a composition bias toward low complexity; sequence PRASSSKESPSPS. A Phosphoserine modification is found at serine 593. Phosphothreonine is present on threonine 596. The stretch at 611–635 forms a coiled coil; sequence RLSQKAEEVYAQLQKMLLEQQEKCL. The region spanning 676 to 815 is the C2 domain; that stretch reads DPPTHHFELK…ENECEIREIV (140 aa).

The protein belongs to the CC2D1 family. As to quaternary structure, interacts with CHMP4B. In terms of tissue distribution, widely distributed in brain and peripheral tissues.

It localises to the nucleus. In terms of biological role, transcription factor that binds specifically to the DRE (dual repressor element) and represses HTR1A gene transcription in neuronal cells. This Homo sapiens (Human) protein is Coiled-coil and C2 domain-containing protein 1B (CC2D1B).